A 431-amino-acid chain; its full sequence is Glutamate-1-semialdehyde 2,1-aminomutase (431 aa).

Position 269 is an N6-(pyridoxal phosphate)lysine (Lys-269).

Belongs to the class-III pyridoxal-phosphate-dependent aminotransferase family. HemL subfamily. As to quaternary structure, homodimer. Pyridoxal 5'-phosphate serves as cofactor.

The protein resides in the cytoplasm. It carries out the reaction (S)-4-amino-5-oxopentanoate = 5-aminolevulinate. The protein operates within porphyrin-containing compound metabolism; protoporphyrin-IX biosynthesis; 5-aminolevulinate from L-glutamyl-tRNA(Glu): step 2/2. Its pathway is porphyrin-containing compound metabolism; chlorophyll biosynthesis. This Chlorobaculum tepidum (strain ATCC 49652 / DSM 12025 / NBRC 103806 / TLS) (Chlorobium tepidum) protein is Glutamate-1-semialdehyde 2,1-aminomutase.